The chain runs to 1097 residues: DNA-directed RNA polymerase subunit beta (1097 aa).

The disordered stretch occupies residues 1071–1097; sequence MQDVNPKRNTPSRPTYESLGTSEYAED. The segment covering 1077–1091 has biased composition (polar residues); sequence KRNTPSRPTYESLGT.

It belongs to the RNA polymerase beta chain family. As to quaternary structure, in cyanobacteria the RNAP catalytic core is composed of 2 alpha, 1 beta, 1 beta', 1 gamma and 1 omega subunit. When a sigma factor is associated with the core the holoenzyme is formed, which can initiate transcription.

The catalysed reaction is RNA(n) + a ribonucleoside 5'-triphosphate = RNA(n+1) + diphosphate. Its function is as follows. DNA-dependent RNA polymerase catalyzes the transcription of DNA into RNA using the four ribonucleoside triphosphates as substrates. The chain is DNA-directed RNA polymerase subunit beta from Prochlorococcus marinus subsp. pastoris (strain CCMP1986 / NIES-2087 / MED4).